Reading from the N-terminus, the 354-residue chain is Uroporphyrinogen decarboxylase (354 aa).

Substrate contacts are provided by residues 27–31, Asp77, Tyr154, Thr209, and His327; that span reads RQAGR.

Belongs to the uroporphyrinogen decarboxylase family. In terms of assembly, homodimer.

The protein resides in the cytoplasm. It catalyses the reaction uroporphyrinogen III + 4 H(+) = coproporphyrinogen III + 4 CO2. It participates in porphyrin-containing compound metabolism; protoporphyrin-IX biosynthesis; coproporphyrinogen-III from 5-aminolevulinate: step 4/4. Its function is as follows. Catalyzes the decarboxylation of four acetate groups of uroporphyrinogen-III to yield coproporphyrinogen-III. The polypeptide is Uroporphyrinogen decarboxylase (Salmonella newport (strain SL254)).